Consider the following 82-residue polypeptide: ATP synthase subunit c (82 aa).

Transmembrane regions (helical) follow at residues 7-27 and 57-77; these read AASVLAAALAVGLAAIGPGIG and LAFMEALTIYGLVVALVLLFA.

It belongs to the ATPase C chain family. In terms of assembly, F-type ATPases have 2 components, F(1) - the catalytic core - and F(0) - the membrane proton channel. F(1) has five subunits: alpha(3), beta(3), gamma(1), delta(1), epsilon(1). F(0) has four main subunits: a(1), b(1), b'(1) and c(10-14). The alpha and beta chains form an alternating ring which encloses part of the gamma chain. F(1) is attached to F(0) by a central stalk formed by the gamma and epsilon chains, while a peripheral stalk is formed by the delta, b and b' chains.

It localises to the cellular thylakoid membrane. Its function is as follows. F(1)F(0) ATP synthase produces ATP from ADP in the presence of a proton or sodium gradient. F-type ATPases consist of two structural domains, F(1) containing the extramembraneous catalytic core and F(0) containing the membrane proton channel, linked together by a central stalk and a peripheral stalk. During catalysis, ATP synthesis in the catalytic domain of F(1) is coupled via a rotary mechanism of the central stalk subunits to proton translocation. In terms of biological role, key component of the F(0) channel; it plays a direct role in translocation across the membrane. A homomeric c-ring of between 10-14 subunits forms the central stalk rotor element with the F(1) delta and epsilon subunits. In Synechococcus sp. (strain WH7803), this protein is ATP synthase subunit c.